A 204-amino-acid polypeptide reads, in one-letter code: N-(5'-phosphoribosyl)anthranilate isomerase (204 aa).

It belongs to the TrpF family.

It catalyses the reaction N-(5-phospho-beta-D-ribosyl)anthranilate = 1-(2-carboxyphenylamino)-1-deoxy-D-ribulose 5-phosphate. Its pathway is amino-acid biosynthesis; L-tryptophan biosynthesis; L-tryptophan from chorismate: step 3/5. The protein is N-(5'-phosphoribosyl)anthranilate isomerase of Bacillus cereus (strain AH820).